Reading from the N-terminus, the 258-residue chain is Hydroxyacylglutathione hydrolase (258 aa).

Zn(2+)-binding residues include His52, His54, Asp56, His57, His109, Asp126, and His164.

Belongs to the metallo-beta-lactamase superfamily. Glyoxalase II family. In terms of assembly, monomer. Zn(2+) serves as cofactor.

The enzyme catalyses an S-(2-hydroxyacyl)glutathione + H2O = a 2-hydroxy carboxylate + glutathione + H(+). It functions in the pathway secondary metabolite metabolism; methylglyoxal degradation; (R)-lactate from methylglyoxal: step 2/2. Thiolesterase that catalyzes the hydrolysis of S-D-lactoyl-glutathione to form glutathione and D-lactic acid. The sequence is that of Hydroxyacylglutathione hydrolase from Xylella fastidiosa (strain M23).